Reading from the N-terminus, the 559-residue chain is Mercuric reductase (559 aa).

The HMA domain occupies Met1–Thr64. The a metal cation site is built by Cys10 and Cys13. FAD contacts are provided by Ala108, Gly128, and Thr133. An intrachain disulfide couples Cys134 to Cys139. FAD contacts are provided by Lys143, Ala209, Asp401, and Val409. Residues Cys556 and Cys557 each coordinate Hg(2+).

It belongs to the class-I pyridine nucleotide-disulfide oxidoreductase family. Homodimer. FAD serves as cofactor.

It catalyses the reaction Hg + NADP(+) + H(+) = Hg(2+) + NADPH. Its function is as follows. Resistance to Hg(2+) in bacteria appears to be governed by a specialized system which includes mercuric reductase. MerA protein is responsible for volatilizing mercury as Hg(0). The protein is Mercuric reductase (merA) of Alcaligenes sp.